Here is a 235-residue protein sequence, read N- to C-terminus: Sugar fermentation stimulation protein homolog (235 aa).

Belongs to the SfsA family.

The polypeptide is Sugar fermentation stimulation protein homolog (Pseudomonas aeruginosa (strain LESB58)).